Here is a 197-residue protein sequence, read N- to C-terminus: Phosphoheptose isomerase (197 aa).

The SIS domain occupies 36–197 (MTASLMNNGK…IDCLLLGVEE (162 aa)). 51-53 (NGG) is a substrate binding site. The Zn(2+) site is built by His-60 and Glu-64. Residues Glu-64, 93-94 (ND), 119-121 (STS), Ser-124, and Gln-174 each bind substrate. Residues Gln-174 and His-182 each coordinate Zn(2+).

It belongs to the SIS family. GmhA subfamily. As to quaternary structure, homotetramer. Zn(2+) is required as a cofactor.

It localises to the cytoplasm. The enzyme catalyses 2 D-sedoheptulose 7-phosphate = D-glycero-alpha-D-manno-heptose 7-phosphate + D-glycero-beta-D-manno-heptose 7-phosphate. The protein operates within carbohydrate biosynthesis; D-glycero-D-manno-heptose 7-phosphate biosynthesis; D-glycero-alpha-D-manno-heptose 7-phosphate and D-glycero-beta-D-manno-heptose 7-phosphate from sedoheptulose 7-phosphate: step 1/1. In terms of biological role, catalyzes the isomerization of sedoheptulose 7-phosphate in D-glycero-D-manno-heptose 7-phosphate. The sequence is that of Phosphoheptose isomerase from Azoarcus sp. (strain BH72).